Here is a 170-residue protein sequence, read N- to C-terminus: MTGVDEILNYQRNPDDDYYALLGCDENSTVEQITAEYKILALQHHPDKNDGEKEAEMKFQKLKEAKEILCDPSKRALYDKWRRSGIAMGFKQWLGMKDHVQQSMHWSKPNTKDRMLEGDGSKPSGPSSLGPSNPATRRASEGGAALWGRWGTGNQEPPSEVLSKFRNYEI.

Residues 17 to 82 (DYYALLGCDE…SKRALYDKWR (66 aa)) enclose the J domain. Residues 101 to 170 (QQSMHWSKPN…VLSKFRNYEI (70 aa)) form a disordered region. Positions 110–120 (NTKDRMLEGDG) are enriched in basic and acidic residues. The span at 121 to 134 (SKPSGPSSLGPSNP) shows a compositional bias: low complexity.

This Bombyx mori (Silk moth) protein is J domain-containing protein (jdp).